The following is a 567-amino-acid chain: Septation ring formation regulator EzrA (567 aa).

At 1-2 the chain is on the extracellular side; the sequence is ME. The helical transmembrane segment at 3 to 21 threads the bilayer; sequence FIIGLIVILLALFSVGYFL. Residues 22–567 are Cytoplasmic-facing; sequence RKNIYKEIDR…AQQEKEYQHQ (546 aa). 3 coiled-coil regions span residues 108–185, 243–375, and 402–529; these read IEDL…YEEE, KGYK…RDHV, and KGHL…ERRF.

The protein belongs to the EzrA family.

It localises to the cell membrane. In terms of biological role, negative regulator of FtsZ ring formation; modulates the frequency and position of FtsZ ring formation. Inhibits FtsZ ring formation at polar sites. Interacts either with FtsZ or with one of its binding partners to promote depolymerization. The protein is Septation ring formation regulator EzrA of Bacillus pumilus (strain SAFR-032).